Here is an 838-residue protein sequence, read N- to C-terminus: Leucine--tRNA ligase 1 (838 aa).

Residues 40-51 (PYPSGAGLHVGH) carry the 'HIGH' region motif. Residues 608 to 612 (KMSKS) carry the 'KMSKS' region motif. Lys611 is a binding site for ATP.

The protein belongs to the class-I aminoacyl-tRNA synthetase family.

Its subcellular location is the cytoplasm. It carries out the reaction tRNA(Leu) + L-leucine + ATP = L-leucyl-tRNA(Leu) + AMP + diphosphate. In Rhizobium johnstonii (strain DSM 114642 / LMG 32736 / 3841) (Rhizobium leguminosarum bv. viciae), this protein is Leucine--tRNA ligase 1.